Reading from the N-terminus, the 2849-residue chain is Polycystin-1-like protein 1 (2849 aa).

The Extracellular portion of the chain corresponds to 1 to 1748; sequence MAEEAAQNIS…SDISKLQSHP (1748 aa). Residues N8, N295, N338, N376, N447, N482, N514, N605, N657, N751, N875, N926, and N937 are each glycosylated (N-linked (GlcNAc...) asparagine). 2 consecutive PKD domains span residues 508-590 and 592-673; these read SVSV…VQKK and VANR…VCEP. An REJ domain is found at 674-1571; it reads CQPPLVKNMG…GEEDGLDNRR (898 aa). The segment covering 970–987 has biased composition (low complexity); it reads NLLPTEPGTADPDATTTP. 2 disordered regions span residues 970 to 1068 and 1081 to 1118; these read NLLP…PHLS and IPSGGRQPAKDTSFPGSGPSLSAEESPGDGDNLVDPSL. The span at 1053-1068 shows a compositional bias: basic and acidic residues; the sequence is RSERSQPTHSPDPHLS. N-linked (GlcNAc...) asparagine glycans are attached at residues N1233, N1301, N1306, N1572, N1681, and N1716. Residues 1587-1735 enclose the GAIN-B domain; it reads QFTELSENPQ…ALLRRKLKAS (149 aa). A disulfide bridge links C1691 with C1717. The tract at residues 1691-1735 is GPS; sequence CLFWDKREWKSERFSPQPGTSPEKVNCSYHRLAAFALLRRKLKAS. A helical transmembrane segment spans residues 1749-1769; that stretch reads ENLLPSIFIMGSVILYGFLVA. At 1770–1956 the chain is on the cytoplasmic side; sequence KSRQVDHHEK…SSSRYLHTPR (187 aa). A PLAT domain is found at 1796–1913; it reads QLYAVVIDTG…HDGRVERELT (118 aa). A helical transmembrane segment spans residues 1957-1977; sequence LTVSFSLLCVYACLTALVAAG. Over 1978 to 1992 the chain is Extracellular; that stretch reads GQEQPHLDVSPTLGS. The helical transmembrane segment at 1993 to 2013 threads the bilayer; it reads FRVGLLCTLLASPGAQLLSLL. Topologically, residues 2014–2135 are cytoplasmic; it reads FRLSKEAPGS…SRALQPWWSS (122 aa). The tract at residues 2023-2089 is disordered; sequence SARVEPHSPL…GTACPAPKLQ (67 aa). The helical transmembrane segment at 2136–2156 threads the bilayer; the sequence is AVWAICGTASLACSLGTGFLA. Topologically, residues 2157–2174 are extracellular; sequence YRFGQEQCVQWLHLLSLS. The chain crosses the membrane as a helical span at residues 2175 to 2195; the sequence is VVCCIFITQPLMVCLMALGFA. At 2196 to 2281 the chain is on the cytoplasmic side; it reads WKRRADNHFF…QRMRRESRTR (86 aa). Residues 2282 to 2302 form a helical membrane-spanning segment; it reads AALRDISMDILMLLLLLCVIY. Over 2303–2522 the chain is Extracellular; the sequence is GRFSQDEYSL…FRSDSALQYH (220 aa). The N-linked (GlcNAc...) asparagine glycan is linked to N2426. A helical membrane pass occupies residues 2523 to 2543; sequence LMLPQLVFLALSLIHLCVQLY. Over 2544 to 2562 the chain is Cytoplasmic; sequence RMMDKGVLSYWRKPRNWLE. The helical transmembrane segment at 2563–2583 threads the bilayer; sequence LSVVGVSLTYYAVSGHLVTLA. At 2584-2616 the chain is on the extracellular side; it reads GDVTNQFHRGLCRAFMDLTLMASWNQRARWLRG. Residues 2617–2637 form a helical membrane-spanning segment; that stretch reads ILLFLFTLKCVYLPGIQNTMA. At 2638–2646 the chain is on the cytoplasmic side; the sequence is SCSSMMRHS. A helical membrane pass occupies residues 2647-2667; sequence LPSIFVAGLVGALMLAALSHL. At 2668–2711 the chain is on the extracellular side; that stretch reads HRFLLSMWVLPPGTFTDAFPGLLFHFPRRSQKDCLLGLSKSDQR. The helical transmembrane segment at 2712 to 2732 threads the bilayer; the sequence is AMACYFGILLIVSATLCFGML. Residues 2733–2849 are Cytoplasmic-facing; the sequence is RGFLMTLPQK…AAEPADIKDF (117 aa).

This sequence belongs to the polycystin family. As to quaternary structure, heterodimer. Interacts with PKD2 to form a calcium channel. Interacts with PKD2L1; to form ciliary calcium channel. May interact with GNA12, GNAS, GNAI1 and GNAI2. Detected in testis and in fetal and adult heart.

The protein localises to the cell projection. It is found in the cilium membrane. Component of a calcium-permeant ion channel formed by PKD1L2 and PKD1L1 in primary cilia, where it controls cilium calcium concentration, without affecting cytoplasmic calcium concentration, and regulates sonic hedgehog/SHH signaling and GLI2 transcription. The PKD1L1:PKD2L1 channel complex is mechanosensitive only at high pressures and is highly temperature sensitive. Also involved in left/right axis specification downstream of nodal flow by forming a complex with PKD2 in cilia to facilitate flow detection in left/right patterning. May function as a G-protein-coupled receptor. This is Polycystin-1-like protein 1 from Homo sapiens (Human).